Reading from the N-terminus, the 51-residue chain is Large ribosomal subunit protein eL39 (51 aa).

It belongs to the eukaryotic ribosomal protein eL39 family.

This is Large ribosomal subunit protein eL39 from Staphylothermus marinus (strain ATCC 43588 / DSM 3639 / JCM 9404 / F1).